The primary structure comprises 532 residues: 2,3-bisphosphoglycerate-independent phosphoglycerate mutase (532 aa).

The Mn(2+) site is built by aspartate 15 and serine 65. The active-site Phosphoserine intermediate is serine 65. Residues histidine 126, 156–157 (RD), arginine 188, arginine 194, 258–261 (RPDR), and lysine 331 each bind substrate. The Mn(2+) site is built by aspartate 398, histidine 402, aspartate 439, histidine 440, and histidine 457.

Belongs to the BPG-independent phosphoglycerate mutase family. As to quaternary structure, monomer. Requires Mn(2+) as cofactor.

It catalyses the reaction (2R)-2-phosphoglycerate = (2R)-3-phosphoglycerate. It functions in the pathway carbohydrate degradation; glycolysis; pyruvate from D-glyceraldehyde 3-phosphate: step 3/5. Catalyzes the interconversion of 2-phosphoglycerate and 3-phosphoglycerate. This is 2,3-bisphosphoglycerate-independent phosphoglycerate mutase from Microcystis aeruginosa (strain NIES-843 / IAM M-2473).